A 194-amino-acid polypeptide reads, in one-letter code: Peptidyl-tRNA hydrolase (194 aa).

Residue H17 coordinates tRNA. The active-site Proton acceptor is H22. TRNA-binding residues include F68, N70, and N116.

It belongs to the PTH family. In terms of assembly, monomer.

The protein resides in the cytoplasm. The enzyme catalyses an N-acyl-L-alpha-aminoacyl-tRNA + H2O = an N-acyl-L-amino acid + a tRNA + H(+). In terms of biological role, hydrolyzes ribosome-free peptidyl-tRNAs (with 1 or more amino acids incorporated), which drop off the ribosome during protein synthesis, or as a result of ribosome stalling. Its function is as follows. Catalyzes the release of premature peptidyl moieties from peptidyl-tRNA molecules trapped in stalled 50S ribosomal subunits, and thus maintains levels of free tRNAs and 50S ribosomes. This chain is Peptidyl-tRNA hydrolase, found in Xanthomonas oryzae pv. oryzae (strain MAFF 311018).